The chain runs to 229 residues: DNA mismatch repair protein MutH (229 aa).

The protein belongs to the MutH family.

The protein resides in the cytoplasm. Functionally, sequence-specific endonuclease that cleaves unmethylated GATC sequences. It is involved in DNA mismatch repair. The chain is DNA mismatch repair protein MutH from Shigella flexneri serotype 5b (strain 8401).